The chain runs to 530 residues: Transcriptional regulator VasH (530 aa).

The 230-residue stretch at 193–422 (LIGESAAMQK…LKHLIEFGCA (230 aa)) folds into the Sigma-54 factor interaction domain. ATP-binding positions include 221–228 (GETGTGKE) and 284–293 (ANGGTLFLDE).

Functionally, transcriptional regulator of the type VI secretion system. The polypeptide is Transcriptional regulator VasH (Vibrio cholerae serotype O1 (strain ATCC 39315 / El Tor Inaba N16961)).